Here is a 251-residue protein sequence, read N- to C-terminus: 5-oxoprolinase subunit A (251 aa).

It belongs to the LamB/PxpA family. As to quaternary structure, forms a complex composed of PxpA, PxpB and PxpC.

It carries out the reaction 5-oxo-L-proline + ATP + 2 H2O = L-glutamate + ADP + phosphate + H(+). Functionally, catalyzes the cleavage of 5-oxoproline to form L-glutamate coupled to the hydrolysis of ATP to ADP and inorganic phosphate. This is 5-oxoprolinase subunit A from Vibrio parahaemolyticus serotype O3:K6 (strain RIMD 2210633).